The chain runs to 297 residues: Cyclin-dependent kinase 1 (297 aa).

An N-acetylmethionine modification is found at methionine 1. Position 4 is a phosphotyrosine; by PKR (tyrosine 4). One can recognise a Protein kinase domain in the interval 4–287; sequence YIKIEKIGEG…GKMALKHPYF (284 aa). An N6-acetyllysine; alternate mark is found at lysine 6 and lysine 9. Residues lysine 6 and lysine 9 each participate in a glycyl lysine isopeptide (Lys-Gly) (interchain with G-Cter in SUMO2); alternate cross-link. ATP is bound at residue 10 to 18; sequence IGEGTYGVV. Residue threonine 14 is modified to Phosphothreonine; by PKMYT1. Tyrosine 15 bears the Phosphotyrosine; by PKMYT1, WEE1, WEE2 and PKC/PRKCD mark. The residue at position 15 (tyrosine 15) is a Phosphotyrosine; by WEE1 and WEE2. Residue tyrosine 19 is modified to Phosphotyrosine. Residue lysine 20 forms a Glycyl lysine isopeptide (Lys-Gly) (interchain with G-Cter in SUMO2) linkage. An ATP-binding site is contributed by lysine 33. Serine 39 is subject to Phosphoserine. The residue at position 77 (tyrosine 77) is a Phosphotyrosine. Residue aspartate 128 is the Proton acceptor of the active site. A Glycyl lysine isopeptide (Lys-Gly) (interchain with G-Cter in SUMO2) cross-link involves residue lysine 139. Residue threonine 141 is modified to Phosphothreonine. Phosphothreonine; by CAK is present on threonine 161. Serine 178 carries the phosphoserine modification. At threonine 222 the chain carries Phosphothreonine. At lysine 245 the chain carries N6-succinyllysine. At serine 248 the chain carries Phosphoserine.

Belongs to the protein kinase superfamily. CMGC Ser/Thr protein kinase family. CDC2/CDKX subfamily. In terms of assembly, forms a stable but non-covalent complex with a regulatory subunit and with a cyclin. Interacts with cyclins-B (CCNB1, CCNB2 and CCNB3) to form a serine/threonine kinase holoenzyme complex also known as maturation promoting factor (MPF). The cyclin subunit imparts substrate specificity to the complex. Can also form CDK1-cylin-D and CDK1-cyclin-E complexes that phosphorylate RB1 in vitro. Binds to RB1 and other transcription factors such as FOXO1 and RUNX2. Promotes G2-M transition when in complex with a cyclin-B. Interacts with DLGAP5. Binds to the CDK inhibitors CDKN1A/p21 and CDKN1B/p27. Isoform 2 is unable to complex with cyclin-B1 and also fails to bind to CDKN1A/p21. Interacts with catalytically active CCNB1 and RALBP1 during mitosis to form an endocytotic complex during interphase. Associates with cyclins-A and B1 during S-phase in regenerating hepatocytes. Interacts with FANCC. Interacts with CEP63; this interaction recruits CDK1 to centrosomes. Interacts with CENPA. Interacts with NR1D1. Interacts with proteasome subunit PSMA8; to participate in meiosis progression during spermatogenesis. Phosphorylation at Thr-161 by CAK/CDK7 activates kinase activity. Phosphorylation at Thr-14 and Tyr-15 by PKMYT1 prevents nuclear translocation. Phosphorylation at Tyr-15 by WEE1 and WEE2 inhibits the protein kinase activity and acts as a negative regulator of entry into mitosis (G2 to M transition). Phosphorylation by PKMYT1 and WEE1 takes place during mitosis to keep CDK1-cyclin-B complexes inactive until the end of G2. By the end of G2, PKMYT1 and WEE1 are inactivated, but CDC25A and CDC25B are activated. Dephosphorylation by active CDC25A and CDC25B at Thr-14 and Tyr-15, leads to CDK1 activation at the G2-M transition. Phosphorylation at Tyr-15 by WEE2 during oogenesis is required to maintain meiotic arrest in oocytes during the germinal vesicle (GV) stage, a long period of quiescence at dictyate prophase I, leading to prevent meiotic reentry. Phosphorylation by WEE2 is also required for metaphase II exit during egg activation to ensure exit from meiosis in oocytes and promote pronuclear formation. Phosphorylated at Tyr-4 by PKR/EIF2AK2 upon genotoxic stress. This phosphorylation triggers CDK1 polyubiquitination and subsequent proteolysis, thus leading to G2 arrest. In response to UV irradiation, phosphorylation at Tyr-15 by PRKCD activates the G2/M DNA damage checkpoint. Post-translationally, polyubiquitinated upon genotoxic stress.

It localises to the nucleus. The protein localises to the cytoplasm. It is found in the mitochondrion. Its subcellular location is the cytoskeleton. The protein resides in the microtubule organizing center. It localises to the centrosome. The protein localises to the spindle. The enzyme catalyses L-seryl-[protein] + ATP = O-phospho-L-seryl-[protein] + ADP + H(+). It carries out the reaction L-threonyl-[protein] + ATP = O-phospho-L-threonyl-[protein] + ADP + H(+). It catalyses the reaction [DNA-directed RNA polymerase] + ATP = phospho-[DNA-directed RNA polymerase] + ADP + H(+). With respect to regulation, phosphorylation at Thr-14 or Tyr-15 inactivates the enzyme, while phosphorylation at Thr-161 activates it. Activated through a multistep process; binding to cyclin-B is required for relocation of cyclin-kinase complexes to the nucleus, activated by CAK/CDK7-mediated phosphorylation on Thr-161, and CDC25-mediated dephosphorylation of inhibitory phosphorylation on Thr-14 and Tyr-15. Activity is restricted during S-phase in an ATR-dependent manner to prevent premature entry into G2. Repressed by the CDK inhibitors CDKN1A/p21 and CDKN1B/p27 during the G1 phase and by CDKN1A/p21 at the G1-S checkpoint upon DNA damage. Transient activation by rapid and transient dephosphorylation at Tyr-15 triggered by TGFB1. In terms of biological role, plays a key role in the control of the eukaryotic cell cycle by modulating the centrosome cycle as well as mitotic onset; promotes G2-M transition via association with multiple interphase cyclins. Phosphorylates PARVA/actopaxin, APC, AMPH, APC, BARD1, Bcl-xL/BCL2L1, BRCA2, CALD1, CASP8, CDC7, CDC20, CDC25A, CDC25C, CC2D1A, CENPA, CSNK2 proteins/CKII, FZR1/CDH1, CDK7, CEBPB, CHAMP1, DMD/dystrophin, EEF1 proteins/EF-1, EZH2, KIF11/EG5, EGFR, FANCG, FOS, GFAP, GOLGA2/GM130, GRASP1, UBE2A/hHR6A, HIST1H1 proteins/histone H1, HMGA1, HIVEP3/KRC, KAT5, LMNA, LMNB, LBR, MKI67, LATS1, MAP1B, MAP4, MARCKS, MCM2, MCM4, MKLP1, MLST8, MYB, NEFH, NFIC, NPC/nuclear pore complex, PITPNM1/NIR2, NPM1, NCL, NUCKS1, NPM1/numatrin, ORC1, PRKAR2A, EEF1E1/p18, EIF3F/p47, p53/TP53, NONO/p54NRB, PAPOLA, PLEC/plectin, RB1, TPPP, UL40/R2, RAB4A, RAP1GAP, RBBP8/CtIP, RCC1, RPS6KB1/S6K1, KHDRBS1/SAM68, ESPL1, SKI, BIRC5/survivin, STIP1, TEX14, beta-tubulins, MAPT/TAU, NEDD1, VIM/vimentin, TK1, FOXO1, RUNX1/AML1, SAMHD1, SIRT2, CGAS, ZAR1 and RUNX2. CDK1/CDC2-cyclin-B controls pronuclear union in interphase fertilized eggs. Essential for early stages of embryonic development. During G2 and early mitosis, CDC25A/B/C-mediated dephosphorylation activates CDK1/cyclin complexes which phosphorylate several substrates that trigger at least centrosome separation, Golgi dynamics, nuclear envelope breakdown and chromosome condensation. Once chromosomes are condensed and aligned at the metaphase plate, CDK1 activity is switched off by WEE1- and PKMYT1-mediated phosphorylation to allow sister chromatid separation, chromosome decondensation, reformation of the nuclear envelope and cytokinesis. Phosphorylates KRT5 during prometaphase and metaphase. Inactivated by PKR/EIF2AK2- and WEE1-mediated phosphorylation upon DNA damage to stop cell cycle and genome replication at the G2 checkpoint thus facilitating DNA repair. Reactivated after successful DNA repair through WIP1-dependent signaling leading to CDC25A/B/C-mediated dephosphorylation and restoring cell cycle progression. Catalyzes lamin (LMNA, LMNB1 and LMNB2) phosphorylation at the onset of mitosis, promoting nuclear envelope breakdown. In proliferating cells, CDK1-mediated FOXO1 phosphorylation at the G2-M phase represses FOXO1 interaction with 14-3-3 proteins and thereby promotes FOXO1 nuclear accumulation and transcription factor activity, leading to cell death of postmitotic neurons. The phosphorylation of beta-tubulins regulates microtubule dynamics during mitosis. NEDD1 phosphorylation promotes PLK1-mediated NEDD1 phosphorylation and subsequent targeting of the gamma-tubulin ring complex (gTuRC) to the centrosome, an important step for spindle formation. In addition, CC2D1A phosphorylation regulates CC2D1A spindle pole localization and association with SCC1/RAD21 and centriole cohesion during mitosis. The phosphorylation of Bcl-xL/BCL2L1 after prolongated G2 arrest upon DNA damage triggers apoptosis. In contrast, CASP8 phosphorylation during mitosis prevents its activation by proteolysis and subsequent apoptosis. This phosphorylation occurs in cancer cell lines, as well as in primary breast tissues and lymphocytes. EZH2 phosphorylation promotes H3K27me3 maintenance and epigenetic gene silencing. CALD1 phosphorylation promotes Schwann cell migration during peripheral nerve regeneration. CDK1-cyclin-B complex phosphorylates NCKAP5L and mediates its dissociation from centrosomes during mitosis. Regulates the amplitude of the cyclic expression of the core clock gene BMAL1 by phosphorylating its transcriptional repressor NR1D1, and this phosphorylation is necessary for SCF(FBXW7)-mediated ubiquitination and proteasomal degradation of NR1D1. Phosphorylates EML3 at 'Thr-881' which is essential for its interaction with HAUS augmin-like complex and TUBG1. Phosphorylates CGAS during mitosis, leading to its inhibition, thereby preventing CGAS activation by self DNA during mitosis. Phosphorylates SKA3 during mitosis which promotes SKA3 binding to the NDC80 complex and anchoring of the SKA complex to kinetochores, to enable stable attachment of mitotic spindle microtubules to kinetochores. This is Cyclin-dependent kinase 1 (Cdk1) from Rattus norvegicus (Rat).